The chain runs to 757 residues: Endosialin (757 aa).

Positions 1 to 17 (MLLRLLLAWAAAGPTLG) are cleaved as a signal peptide. The Extracellular portion of the chain corresponds to 18–687 (QDPWAAEPRA…EHSQRDDRWL (670 aa)). Residues 30 to 156 (GPSSCYALFP…CTLAVDGYLC (127 aa)) enclose the C-type lectin domain. O-linked (GalNAc...) threonine glycosylation is present at threonine 60. An intrachain disulfide couples cysteine 131 to cysteine 147. Residues 162-232 (GACPALQDEA…WSRAGPLCLG (71 aa)) enclose the Sushi domain. The region spanning 312–351 (DTDECQIAGVCQQMCVNYVGGFECYCSEGHELEADGISCS) is the EGF-like; calcium-binding domain. 3 disulfide bridges follow: cysteine 316/cysteine 326, cysteine 322/cysteine 335, and cysteine 337/cysteine 350. Residues threonine 401, threonine 428, threonine 448, threonine 456, threonine 459, threonine 472, threonine 519, threonine 541, threonine 543, threonine 544, threonine 545, threonine 587, threonine 593, threonine 594, and threonine 595 are each glycosylated (O-linked (GalNAc...) threonine). Serine 598 and serine 601 each carry an O-linked (GalNAc...) serine glycan. O-linked (GalNAc...) threonine glycans are attached at residues threonine 612 and threonine 619. Over residues 618-627 (PTLLPSQSPT) the composition is skewed to low complexity. The disordered stretch occupies residues 618 to 662 (PTLLPSQSPTNQTSPISPTHPHSKAPQIPREDGPSPKLALWLPSP). 2 O-linked (GalNAc...) serine glycosylation sites follow: serine 623 and serine 625. O-linked (GalNAc...) threonine glycosylation is found at threonine 627 and threonine 630. An O-linked (GalNAc...) serine glycan is attached at serine 631. A glycan (O-linked (GalNAc...) threonine) is linked at threonine 636. An O-linked (GalNAc...) serine glycan is attached at serine 640. The chain crosses the membrane as a helical span at residues 688–708 (LVALLVPTCVFLVVLLALGIV). The Cytoplasmic portion of the chain corresponds to 709–757 (YCTRCGPHAPNKRITDCYRWVIHAGSKSPTEPMPPRGSLTGVQTCRTSV). The tract at residues 737–757 (PTEPMPPRGSLTGVQTCRTSV) is disordered. Residue serine 746 is modified to Phosphoserine. Residues 748–757 (TGVQTCRTSV) are compositionally biased toward polar residues.

As to quaternary structure, interacts with PDGFRA; this interaction promotes PDGF receptor signaling pathway. Interacts with integrin beta-1/ITGB1. Interacts with insulin receptor/INSR; this interaction diminishes INSR autophosphorylation. In terms of processing, O-glycosylated with sialylated oligosaccharides. May be N-glycosylated. In terms of tissue distribution, expressed in tumor endothelial cells but absent or barely detectable in normal endothelial cells. Expressed in metastatic lesions of the liver and during angiogenesis of corpus luteum formation and wound healing. Expressed in vascular endothelial cells of malignant tumors but not in normal blood vessels. Expressed in stromal fibroblasts. Strongly expressed in pericytes. Expressed on stromal cells and cells with lymphoid morphology such a T-cells.

The protein resides in the membrane. In terms of biological role, cell surface glycoprotein involved in various biological processes including angiogenesis, immune response modulation, and tissue remodeling and repair. Participates in pericyte proliferation through positive modulation of the PDGF receptor signaling pathway. Acts as a scaffold for factor X, triggering allosteric changes and the spatial re-alignment of factor X with the TF-factor VIIa complex, thereby enhancing coagulation activation. Modulates the insulin signaling pathway by interacting with insulin receptor/INSR and by diminishing its capacity to be autophosphorylated in response to insulin. Also regulates LPS-induced inflammatory response in macrophages by favoring the production of proinflammatory cytokines. In human, negatively regulates T-cell proliferation compared with stromal cells where it increases proliferation. The sequence is that of Endosialin (CD248) from Homo sapiens (Human).